The primary structure comprises 258 residues: Indole-3-glycerol phosphate synthase (258 aa).

It belongs to the TrpC family.

It catalyses the reaction 1-(2-carboxyphenylamino)-1-deoxy-D-ribulose 5-phosphate + H(+) = (1S,2R)-1-C-(indol-3-yl)glycerol 3-phosphate + CO2 + H2O. Its pathway is amino-acid biosynthesis; L-tryptophan biosynthesis; L-tryptophan from chorismate: step 4/5. This is Indole-3-glycerol phosphate synthase from Chlorobium phaeobacteroides (strain DSM 266 / SMG 266 / 2430).